The following is a 141-amino-acid chain: Hemoglobin subunit alpha-D (141 aa).

The Globin domain occupies 1-141; the sequence is MLTADDKKLI…VAAVLAEKYR (141 aa). Heme b is bound by residues His-58 and His-87.

This sequence belongs to the globin family. Heterotetramer of two alpha-D chains and two beta chains. As to expression, red blood cells.

Its function is as follows. Involved in oxygen transport from the lung to the various peripheral tissues. In Aegypius monachus (Cinereous vulture), this protein is Hemoglobin subunit alpha-D (HBAD).